Here is a 383-residue protein sequence, read N- to C-terminus: Chaperone protein DnaJ (383 aa).

The J domain occupies 5-70 (DYYELLGVSR…QKRAAYDRFG (66 aa)). The segment at 140–219 (GTKTEIRVPT…CSGAGTVPRE (80 aa)) adopts a CR-type zinc-finger fold. Residues Cys-153, Cys-156, Cys-171, Cys-174, Cys-193, Cys-196, Cys-207, and Cys-210 each contribute to the Zn(2+) site. 4 CXXCXGXG motif repeats span residues 153–160 (CDACSGTG), 171–178 (CPTCGGAG), 193–200 (CPTCGGAG), and 207–214 (CRVCSGAG).

The protein belongs to the DnaJ family. In terms of assembly, homodimer. Zn(2+) serves as cofactor.

The protein resides in the cytoplasm. Participates actively in the response to hyperosmotic and heat shock by preventing the aggregation of stress-denatured proteins and by disaggregating proteins, also in an autonomous, DnaK-independent fashion. Unfolded proteins bind initially to DnaJ; upon interaction with the DnaJ-bound protein, DnaK hydrolyzes its bound ATP, resulting in the formation of a stable complex. GrpE releases ADP from DnaK; ATP binding to DnaK triggers the release of the substrate protein, thus completing the reaction cycle. Several rounds of ATP-dependent interactions between DnaJ, DnaK and GrpE are required for fully efficient folding. Also involved, together with DnaK and GrpE, in the DNA replication of plasmids through activation of initiation proteins. This chain is Chaperone protein DnaJ, found in Acidiphilium cryptum (strain JF-5).